The following is a 734-amino-acid chain: Photosystem I P700 chlorophyll a apoprotein A2 (734 aa).

Helical transmembrane passes span 46 to 69 (IFAS…FHVA), 135 to 158 (LYTG…LHLQ), 175 to 199 (LNHH…HVAI), 273 to 291 (IAHH…GHMY), 330 to 353 (VHFQ…QHMY), 369 to 395 (AALY…IFFI), 417 to 439 (AIIS…LYVH), and 517 to 535 (FLVH…LILV). [4Fe-4S] cluster is bound by residues Cys-559 and Cys-568. 2 helical membrane-spanning segments follow: residues 575–596 (AFYL…YWHW) and 643–665 (LSVW…MFLI). Residues His-654, Met-662, and Tyr-670 each contribute to the chlorophyll a site. Trp-671 is a phylloquinone binding site. The chain crosses the membrane as a helical span at residues 707–727 (LVGLAHFSVGYIFTYAAFLIA).

The protein belongs to the PsaA/PsaB family. As to quaternary structure, the PsaA/B heterodimer binds the P700 chlorophyll special pair and subsequent electron acceptors. PSI consists of a core antenna complex that captures photons, and an electron transfer chain that converts photonic excitation into a charge separation. The eukaryotic PSI reaction center is composed of at least 11 subunits. P700 is a chlorophyll a/chlorophyll a' dimer, A0 is one or more chlorophyll a, A1 is one or both phylloquinones and FX is a shared 4Fe-4S iron-sulfur center. serves as cofactor.

Its subcellular location is the plastid. The protein localises to the chloroplast thylakoid membrane. The enzyme catalyses reduced [plastocyanin] + hnu + oxidized [2Fe-2S]-[ferredoxin] = oxidized [plastocyanin] + reduced [2Fe-2S]-[ferredoxin]. PsaA and PsaB bind P700, the primary electron donor of photosystem I (PSI), as well as the electron acceptors A0, A1 and FX. PSI is a plastocyanin-ferredoxin oxidoreductase, converting photonic excitation into a charge separation, which transfers an electron from the donor P700 chlorophyll pair to the spectroscopically characterized acceptors A0, A1, FX, FA and FB in turn. Oxidized P700 is reduced on the lumenal side of the thylakoid membrane by plastocyanin. This is Photosystem I P700 chlorophyll a apoprotein A2 from Platanus occidentalis (Sycamore).